We begin with the raw amino-acid sequence, 122 residues long: Small ribosomal subunit protein uS13 (122 aa).

A disordered region spans residues 92–122; the sequence is HRNGLPVRGQRTHTNARTRKGKAKPIAGKKK. A compositionally biased stretch (basic residues) spans 101–122; it reads QRTHTNARTRKGKAKPIAGKKK.

The protein belongs to the universal ribosomal protein uS13 family. In terms of assembly, part of the 30S ribosomal subunit. Forms a loose heterodimer with protein S19. Forms two bridges to the 50S subunit in the 70S ribosome.

Its function is as follows. Located at the top of the head of the 30S subunit, it contacts several helices of the 16S rRNA. In the 70S ribosome it contacts the 23S rRNA (bridge B1a) and protein L5 of the 50S subunit (bridge B1b), connecting the 2 subunits; these bridges are implicated in subunit movement. Contacts the tRNAs in the A and P-sites. This is Small ribosomal subunit protein uS13 from Erythrobacter litoralis (strain HTCC2594).